Reading from the N-terminus, the 448-residue chain is Exodeoxyribonuclease 7 large subunit (448 aa).

It belongs to the XseA family. Heterooligomer composed of large and small subunits.

The protein resides in the cytoplasm. The enzyme catalyses Exonucleolytic cleavage in either 5'- to 3'- or 3'- to 5'-direction to yield nucleoside 5'-phosphates.. Bidirectionally degrades single-stranded DNA into large acid-insoluble oligonucleotides, which are then degraded further into small acid-soluble oligonucleotides. The protein is Exodeoxyribonuclease 7 large subunit of Nitrosomonas eutropha (strain DSM 101675 / C91 / Nm57).